A 395-amino-acid chain; its full sequence is Phosphoprotein (395 aa).

The tract at residues 178-217 is disordered; the sequence is NGVLHGSEIRSKSSSGVIPGVPQSRPQLASSPAHADPAPA. Over residues 206–217 the composition is skewed to low complexity; it reads ASSPAHADPAPA. Positions 220-283 are multimerization; sequence ENVKEIIELL…ITTIKIMDPS (64 aa).

Belongs to the rubulavirus/avulavirus P protein family. As to quaternary structure, homotetramer. Interacts (via multimerization domain) with polymerase L; this interaction forms the polymerase L-P complex. Interacts (via N-terminus) with N0 (via Ncore); this interaction allows P to chaperon N0 to avoid N polymerization before encapsidation. Interacts (via C-terminus) with N-RNA template; this interaction positions the polymerase on the template for both transcription and replication. Interacts with host ARHGAP26; this interaction promotes host RHOA activation. Interacts with host KPNA1 and KPNA6.

The protein localises to the host cytoplasm. Essential cofactor of the RNA polymerase L that plays a central role in the transcription and replication by forming the polymerase complex with RNA polymerase L and recruiting L to the genomic N-RNA template for RNA synthesis. Also plays a central role in the encapsidation of nascent RNA chains by forming the encapsidation complex with the nucleocapsid protein N (N-P complex). Acts as a chaperone for newly synthesized free N protein, so-called N0, allowing encapsidation of nascent RNA chains during replication. The nucleoprotein protein N prevents excessive phosphorylation of P, which leads to down-regulation of viral transcription/ replication. Participates, together with N, in the formation of viral factories (viroplasms), which are large inclusions in the host cytoplasm where replication takes place. Also plays a role in viral growth by promoting host RHOA activation and thus actin formation via ARHGAP26 inhibition. The chain is Phosphoprotein (P/V) from Homo sapiens (Human).